Consider the following 624-residue polypeptide: tRNA uridine 5-carboxymethylaminomethyl modification enzyme MnmG (624 aa).

Position 14–19 (Gly-14–Gly-19) interacts with FAD. Gly-273–Phe-287 contacts NAD(+).

This sequence belongs to the MnmG family. In terms of assembly, homodimer. Heterotetramer of two MnmE and two MnmG subunits. The cofactor is FAD.

It localises to the cytoplasm. Functionally, NAD-binding protein involved in the addition of a carboxymethylaminomethyl (cmnm) group at the wobble position (U34) of certain tRNAs, forming tRNA-cmnm(5)s(2)U34. The polypeptide is tRNA uridine 5-carboxymethylaminomethyl modification enzyme MnmG (Syntrophomonas wolfei subsp. wolfei (strain DSM 2245B / Goettingen)).